Consider the following 298-residue polypeptide: Release factor glutamine methyltransferase (298 aa).

Residues 131–135 (GTGTG), aspartate 162, tryptophan 189, and asparagine 205 contribute to the S-adenosyl-L-methionine site. 205 to 208 (NPPY) provides a ligand contact to substrate.

It belongs to the protein N5-glutamine methyltransferase family. PrmC subfamily.

The catalysed reaction is L-glutaminyl-[peptide chain release factor] + S-adenosyl-L-methionine = N(5)-methyl-L-glutaminyl-[peptide chain release factor] + S-adenosyl-L-homocysteine + H(+). Methylates the class 1 translation termination release factors RF1/PrfA and RF2/PrfB on the glutamine residue of the universally conserved GGQ motif. The polypeptide is Release factor glutamine methyltransferase (Pasteurella multocida (strain Pm70)).